The chain runs to 261 residues: MTKEEGRTYFESLCEEEQSLQESQTHLLNILDILSVLADPRSSDDLLTESLKKLPDLHRELINSSIRLRYDKYQTREAQLLEDTKTGRDVAAGVQNPKSISEYYSTFEHLNRDTLRYINLLKRLSVDLAKQVEVSDPSVTVYEMDKWVPSEKLQGILEQYCAPDTDIRGVDAQIKNYLDQIKMARAKFGLENKYSLKERLSTLTKELNHWRKEWDDIEMLMFGDDAHSMKKMIQKIDSLKSEINAPSESYPVDKEGDIVLE.

Component of the THO complex, which is composed of HPR1, MFT1, THO2 and THP2. Together with SUB2, TEX1 and YRA1, THO forms the transcription/export (TREX) complex. THO associates with DNA and RNA in vitro.

Its subcellular location is the nucleus. Component the THO subcomplex of the TREX complex, which operates in coupling transcription elongation to mRNA export. The THO complex is recruited to transcribed genes and moves along the gene with the elongating polymerase during transcription. THO is important for stabilizing nascent RNA in the RNA polymerase II elongation complex by preventing formation of DNA:RNA hybrids behind the elongating polymerase. It functions in cotranscriptional formation of an export-competent messenger ribonucleoprotein particle (mRNP) by facilitating the loading of ATP-dependent RNA helicase SUB2 and the mRNA export factor YRA1 along the nascent mRNA. This is THO complex subunit THP2 (THP2) from Saccharomyces cerevisiae (strain ATCC 204508 / S288c) (Baker's yeast).